The sequence spans 362 residues: Histidinol-phosphate aminotransferase (362 aa).

Lys211 is modified (N6-(pyridoxal phosphate)lysine).

Belongs to the class-II pyridoxal-phosphate-dependent aminotransferase family. Histidinol-phosphate aminotransferase subfamily. As to quaternary structure, homodimer. Requires pyridoxal 5'-phosphate as cofactor.

It catalyses the reaction L-histidinol phosphate + 2-oxoglutarate = 3-(imidazol-4-yl)-2-oxopropyl phosphate + L-glutamate. Its pathway is amino-acid biosynthesis; L-histidine biosynthesis; L-histidine from 5-phospho-alpha-D-ribose 1-diphosphate: step 7/9. The sequence is that of Histidinol-phosphate aminotransferase from Serratia proteamaculans (strain 568).